Consider the following 481-residue polypeptide: UDP-N-acetylmuramoyl-L-alanyl-D-glutamate--L-lysine ligase (481 aa).

Ser42 contributes to the UDP-N-acetyl-alpha-D-muramoyl-L-alanyl-D-glutamate binding site. Residue 118–124 participates in ATP binding; that stretch reads GTKGKTT. Residues Gln158, 160 to 161, Ser187, and Arg195 each bind UDP-N-acetyl-alpha-D-muramoyl-L-alanyl-D-glutamate; that span reads TT. Residue Lys229 is modified to N6-carboxylysine. The L-lysine recognition motif signature appears at 404–407; that stretch reads DDPN.

It belongs to the MurCDEF family. MurE subfamily. In terms of processing, carboxylation is probably crucial for Mg(2+) binding and, consequently, for the gamma-phosphate positioning of ATP.

The protein resides in the cytoplasm. It carries out the reaction UDP-N-acetyl-alpha-D-muramoyl-L-alanyl-D-glutamate + L-lysine + ATP = UDP-N-acetyl-alpha-D-muramoyl-L-alanyl-gamma-D-glutamyl-L-lysine + ADP + phosphate + H(+). It functions in the pathway cell wall biogenesis; peptidoglycan biosynthesis. Its function is as follows. Catalyzes the addition of L-lysine to the nucleotide precursor UDP-N-acetylmuramoyl-L-alanyl-D-glutamate (UMAG) in the biosynthesis of bacterial cell-wall peptidoglycan. The protein is UDP-N-acetylmuramoyl-L-alanyl-D-glutamate--L-lysine ligase of Streptococcus pyogenes serotype M4 (strain MGAS10750).